We begin with the raw amino-acid sequence, 221 residues long: Putative NAD(P)H nitroreductase YfkO (221 aa).

FMN is bound by residues 15–17 and 73–75; these read RHA and QKQ. 157–162 contacts NAD(+); sequence AAAQIG. FMN contacts are provided by residues 169–170 and R211; that span reads EG.

Belongs to the nitroreductase family. Monomer. The cofactor is FMN.

The sequence is that of Putative NAD(P)H nitroreductase YfkO (yfkO) from Bacillus subtilis (strain 168).